Consider the following 82-residue polypeptide: Diphthamide biosynthesis protein 3 (82 aa).

A DPH-type MB domain is found at 4-60 (FHDEVEIEDFQYDEDSETYFYPCPCGDNFAITKEDLENGEDVATCPSCSLIIKVIYD). Fe cation is bound by residues Cys26, Cys28, Cys48, and Cys51.

Belongs to the DPH3 family. In terms of assembly, component of the 2-(3-amino-3-carboxypropyl)histidine synthase complex composed of DPH1, DPH2, DPH3 and a NADH-dependent reductase. Interacts with SERGEF. Fe(2+) serves as cofactor. In terms of tissue distribution, widely expressed with highest levels in heart, liver, kidney and testis.

The protein localises to the cytoplasm. It localises to the nucleus. The enzyme catalyses [3Fe-4S](1+)-[protein] + Fe(2+)-[Dph3] = [3Fe-4S](0)-[protein] + Fe(3+)-[Dph3]. It catalyses the reaction 2 [3Fe-4S](0)-[protein] + 2 Fe(2+)-[Dph3] + NADH = 2 [4Fe-4S](1+)-[protein] + 2 [Dph3] + NAD(+) + H(+). Its pathway is protein modification; peptidyl-diphthamide biosynthesis. In terms of biological role, required for the first step of diphthamide biosynthesis, a post-translational modification of histidine which occurs in elongation factor 2. DPH1 and DPH2 transfer a 3-amino-3-carboxypropyl (ACP) group from S-adenosyl-L-methionine (SAM) to a histidine residue, the reaction is assisted by a reduction system comprising DPH3 and a NADH-dependent reductase. Acts as an electron donor to reduce the Fe-S cluster in DPH1-DPH2 keeping the [4Fe-4S] clusters in the active and reduced state. Restores iron to DPH1-DPH2 iron-sulfur clusters which have degraded from [4Fe-4S] to [3Fe-4S] by donating an iron atom to reform [4Fe-4S] clusters, in a manner dependent on the presence of elongation factor 2 and SAM. Associates with the elongator complex and is required for tRNA Wobble base modifications mediated by the elongator complex. The elongator complex is required for multiple tRNA modifications, including mcm5U (5-methoxycarbonylmethyl uridine), mcm5s 2U (5-methoxycarbonylmethyl-2-thiouridine), and ncm5U (5-carbamoylmethyl uridine). In Mus musculus (Mouse), this protein is Diphthamide biosynthesis protein 3.